A 440-amino-acid polypeptide reads, in one-letter code: Serine hydroxymethyltransferase (440 aa).

(6S)-5,6,7,8-tetrahydrofolate contacts are provided by residues Leu119 and 123–125; that span reads GHL. Lys228 carries the post-translational modification N6-(pyridoxal phosphate)lysine. 370 to 372 is a (6S)-5,6,7,8-tetrahydrofolate binding site; that stretch reads SPF.

Belongs to the SHMT family. Homodimer. Pyridoxal 5'-phosphate serves as cofactor.

The protein localises to the cytoplasm. The catalysed reaction is (6R)-5,10-methylene-5,6,7,8-tetrahydrofolate + glycine + H2O = (6S)-5,6,7,8-tetrahydrofolate + L-serine. The protein operates within one-carbon metabolism; tetrahydrofolate interconversion. Its pathway is amino-acid biosynthesis; glycine biosynthesis; glycine from L-serine: step 1/1. In terms of biological role, catalyzes the reversible interconversion of serine and glycine with tetrahydrofolate (THF) serving as the one-carbon carrier. This reaction serves as the major source of one-carbon groups required for the biosynthesis of purines, thymidylate, methionine, and other important biomolecules. Also exhibits THF-independent aldolase activity toward beta-hydroxyamino acids, producing glycine and aldehydes, via a retro-aldol mechanism. In Chlorobaculum parvum (strain DSM 263 / NCIMB 8327) (Chlorobium vibrioforme subsp. thiosulfatophilum), this protein is Serine hydroxymethyltransferase.